We begin with the raw amino-acid sequence, 322 residues long: MSKAEIEKEPLNLSQLDLFEEIEKLKKELNAVVLAHYYQEPDIQDVADVLGDSLQLAREAQKTDAEVIVFAGVHFMAETAKILNPNKQVLLPDLEAGCSLADSCPPNLFRHFKAQHPDAIVISYINCSAEIKALSDIICTSSNAMHLVEQIPKEQKIIFAPDKNLGGYLMKKIGREMILWQGSCHVHEIFSEKKLIGLKVRYPGAEVLAHPECESVVLRHADFIGSTKAMLDYSVASDKKEFIVVTESGLIHEMQKRSPKKLFVPAPSTQETCACNECPHMRLNTLEKLYLCMKNRTPEITMSEDLRLAALKPIERMLELSK.

H36 and S53 together coordinate iminosuccinate. C98 contacts [4Fe-4S] cluster. Iminosuccinate-binding positions include 124-126 and S141; that span reads YIN. C184 serves as a coordination point for [4Fe-4S] cluster. Iminosuccinate contacts are provided by residues 210 to 212 and T227; that span reads HPE. C278 contacts [4Fe-4S] cluster.

The protein belongs to the quinolinate synthase family. Type 2 subfamily. The cofactor is [4Fe-4S] cluster.

Its subcellular location is the cytoplasm. It catalyses the reaction iminosuccinate + dihydroxyacetone phosphate = quinolinate + phosphate + 2 H2O + H(+). It participates in cofactor biosynthesis; NAD(+) biosynthesis; quinolinate from iminoaspartate: step 1/1. Functionally, catalyzes the condensation of iminoaspartate with dihydroxyacetone phosphate to form quinolinate. The polypeptide is Quinolinate synthase (Chloroherpeton thalassium (strain ATCC 35110 / GB-78)).